A 228-amino-acid chain; its full sequence is Prolactin-2B1 (228 aa).

An N-terminal signal peptide occupies residues 1-31 (MLLSLTQMLSSRASSRLFLVSYLLLWENVVS). Intrachain disulfides connect C89/C194 and C203/C228.

Belongs to the somatotropin/prolactin family. Expressed specifically in placenta. Expressed at high levels in trophoblast cells from both junctional and labyrinth zones of the chorioallantoic placenta the last week of gestation.

Its subcellular location is the secreted. The sequence is that of Prolactin-2B1 (Prl2b1) from Mus musculus (Mouse).